An 84-amino-acid chain; its full sequence is Short neurotoxin SNTX-1 (84 aa).

Residues 1–21 form the signal peptide; that stretch reads MKTLLLILVVVTIVCLDLVCC. 4 disulfide bridges follow: Cys25–Cys46, Cys39–Cys63, Cys65–Cys76, and Cys77–Cys82.

This sequence belongs to the three-finger toxin family. Short-chain subfamily. Type I alpha-neurotoxin sub-subfamily. In terms of tissue distribution, expressed by the venom gland.

Its subcellular location is the secreted. In terms of biological role, binds to muscle nicotinic acetylcholine receptor (nAChR) and inhibit acetylcholine from binding to the receptor, thereby impairing neuromuscular transmission. The polypeptide is Short neurotoxin SNTX-1 (Demansia vestigiata (Lesser black whip snake)).